We begin with the raw amino-acid sequence, 71 residues long: Sec-independent protein translocase protein TatA (71 aa).

A helical transmembrane segment spans residues 1 to 21 (MGSFSIWHWLIVLVVVLLLFG). The segment at 47–71 (AEEAKTVEHRTDEPVGEVKQKASKS) is disordered. Residues 49-71 (EAKTVEHRTDEPVGEVKQKASKS) show a composition bias toward basic and acidic residues.

The protein belongs to the TatA/E family. The Tat system comprises two distinct complexes: a TatABC complex, containing multiple copies of TatA, TatB and TatC subunits, and a separate TatA complex, containing only TatA subunits. Substrates initially bind to the TatABC complex, which probably triggers association of the separate TatA complex to form the active translocon.

The protein resides in the cell inner membrane. In terms of biological role, part of the twin-arginine translocation (Tat) system that transports large folded proteins containing a characteristic twin-arginine motif in their signal peptide across membranes. TatA could form the protein-conducting channel of the Tat system. This is Sec-independent protein translocase protein TatA from Chelativorans sp. (strain BNC1).